We begin with the raw amino-acid sequence, 96 residues long: C-C motif chemokine 1 (96 aa).

Residues 1 to 23 (MQIITTALVCLLLAGMWPEDVDS) form the signal peptide. 3 disulfides stabilise this stretch: cysteine 33/cysteine 57, cysteine 34/cysteine 73, and cysteine 49/cysteine 91. N-linked (GlcNAc...) asparagine glycosylation occurs at asparagine 52.

It belongs to the intercrine beta (chemokine CC) family. Monomer.

It is found in the secreted. Its function is as follows. Cytokine that is chemotactic for monocytes but not for neutrophils. Binds to CCR8. This chain is C-C motif chemokine 1 (CCL1), found in Homo sapiens (Human).